The following is a 507-amino-acid chain: Dihydrolipoyl dehydrogenase 1, mitochondrial (507 aa).

Residues M1 to F36 constitute a mitochondrion transit peptide. FAD is bound by residues E73 to C82, K91, G155, and T184 to S186. A disulfide bond links C82 and C87. Residues G221–E228, E244, V278, and G313 contribute to the NAD(+) site. FAD-binding positions include D354 and M360–H363. The active-site Proton acceptor is H486.

The protein belongs to the class-I pyridine nucleotide-disulfide oxidoreductase family. Homodimer. Part of both the glycine cleavage system composed of four proteins: P, T, L and H and of the pyruvate dehydrogenase complex containing multiple copies of three enzymatic components: pyruvate dehydrogenase (E1), dihydrolipoamide acetyltransferase (E2) and lipoamide dehydrogenase (E3). It depends on FAD as a cofactor. Post-translationally, S-nytrosylated at unknown positions. Preferentially expressed in leaves, flowers and siliques and at a lower level in roots and stems.

It is found in the mitochondrion matrix. The catalysed reaction is N(6)-[(R)-dihydrolipoyl]-L-lysyl-[protein] + NAD(+) = N(6)-[(R)-lipoyl]-L-lysyl-[protein] + NADH + H(+). Its function is as follows. Lipoamide dehydrogenase is a component of the glycine decarboxylase (GDC) or glycine cleavage system as well as of the alpha-ketoacid dehydrogenase complexes. LPD1 is probably the protein most often associated with the glycine decarboxylase complex while LPD2 is probably incorporated into alpha-ketoacid dehydrogenase complexes. In Arabidopsis thaliana (Mouse-ear cress), this protein is Dihydrolipoyl dehydrogenase 1, mitochondrial (LPD1).